The chain runs to 1061 residues: Atrial natriuretic peptide receptor 1 (1061 aa).

An N-terminal signal peptide occupies residues 1–32; it reads MPGPRRPAGSRLRLLLLLLLPPLLLLLRGSHA. Residues 33 to 473 are Extracellular-facing; it reads GNLTVAVVLP…CNQDHLSTLE (441 aa). Residues N34 and N45 are each glycosylated (N-linked (GlcNAc...) asparagine). Positions 85, 117, and 118 each coordinate chloride. Cystine bridges form between C92-C118 and C196-C245. Residues N212, N338, N379, N386, and N427 are each glycosylated (N-linked (GlcNAc...) asparagine). C455 and C464 are oxidised to a cystine. A helical transmembrane segment spans residues 474 to 494; that stretch reads VLALVGSLSLLGILIVSFFIY. The Cytoplasmic portion of the chain corresponds to 495–1061; it reads RKMQLEKELA…LGERGSSTRG (567 aa). A phosphoserine mark is found at S519 and S529. The Protein kinase domain occupies 528 to 805; that stretch reads GSRLTLSGRG…QIRLTLRKFN (278 aa). T532 carries the phosphothreonine modification. S534, S538, and S542 each carry phosphoserine. Residue T545 is modified to Phosphothreonine. The Guanylate cyclase domain occupies 876 to 1006; the sequence is TIYFSDIVGF…DTVNTASRME (131 aa).

This sequence belongs to the adenylyl cyclase class-4/guanylyl cyclase family. In terms of assembly, homodimer. In terms of processing, phosphorylation of the protein kinase-like domain is required for full activation by ANP.

It is found in the membrane. It carries out the reaction GTP = 3',5'-cyclic GMP + diphosphate. Its function is as follows. Receptor for the atrial natriuretic peptide NPPA/ANP and the brain natriuretic peptide NPPB/BNP which are potent vasoactive hormones playing a key role in cardiovascular homeostasis. Plays an essential role in the regulation of endothelial cell senescence and vascular aging. Upon activation by ANP or BNP, stimulates the production of cyclic guanosine monophosphate (cGMP) that promotes vascular tone and volume homeostasis by activation of protein kinase cGMP-dependent 1/PRKG1 and subsequently PRKAA1, thereby controlling blood pressure and maintaining cardiovascular homeostasis. The protein is Atrial natriuretic peptide receptor 1 of Homo sapiens (Human).